The sequence spans 426 residues: Tryptophan--tRNA ligase (426 aa).

The 'HIGH' region signature appears at 66–74 (PSGEMHLGN). The 'KMSKS' region signature appears at 314–318 (KMSSS).

Belongs to the class-I aminoacyl-tRNA synthetase family.

It is found in the cytoplasm. The enzyme catalyses tRNA(Trp) + L-tryptophan + ATP = L-tryptophyl-tRNA(Trp) + AMP + diphosphate + H(+). The chain is Tryptophan--tRNA ligase from Thermoplasma acidophilum (strain ATCC 25905 / DSM 1728 / JCM 9062 / NBRC 15155 / AMRC-C165).